Reading from the N-terminus, the 296-residue chain is LysM and putative peptidoglycan-binding domain-containing protein 4 (296 aa).

At 1–217 (MRHEELLTKT…PMDGADCGIQ (217 aa)) the chain is on the extracellular side. Residues 29–67 (KNGSGDSGDSSEEESHRVVLRPRGKERHKSGVHQPPQAG) form a disordered region. Asparagine 30 carries N-linked (GlcNAc...) asparagine glycosylation. The span at 46–59 (VVLRPRGKERHKSG) shows a compositional bias: basic residues. One can recognise a LysM domain in the interval 74 to 118 (LQRELAQEDSLNKLALQYGCKVADIKKVNNFIREQDLYALKSVKI). The helical transmembrane segment at 218-238 (WWNAVFIMLLIGIVLPVFYLV) threads the bilayer. Residues 239–296 (YFKIQASGETPNSLNTTVIPNGSMAMGTVPGQAPRLAVAVPAVTSADSQFSQTTQAGS) are Cytoplasmic-facing.

The protein localises to the membrane. This is LysM and putative peptidoglycan-binding domain-containing protein 4 (LYSMD4) from Homo sapiens (Human).